The chain runs to 385 residues: 3-hydroxyisobutyryl-CoA hydrolase, mitochondrial (385 aa).

Positions 120, 145, 168, and 176 each coordinate substrate.

This sequence belongs to the enoyl-CoA hydratase/isomerase family.

The protein resides in the mitochondrion. The enzyme catalyses 3-hydroxy-2-methylpropanoyl-CoA + H2O = 3-hydroxy-2-methylpropanoate + CoA + H(+). Its pathway is amino-acid degradation; L-valine degradation. Hydrolyzes 3-hydroxyisobutyryl-CoA (HIBYL-CoA), a saline catabolite. Has high activity toward isobutyryl-CoA. Could be an isobutyryl-CoA dehydrogenase that functions in valine catabolism. Also hydrolyzes 3-hydroxypropanoyl-CoA. In Xenopus laevis (African clawed frog), this protein is 3-hydroxyisobutyryl-CoA hydrolase, mitochondrial (hibch).